The sequence spans 206 residues: Dephospho-CoA kinase (206 aa).

A DPCK domain is found at 4–200 (IVALTGGIGS…AHYLQLASQF (197 aa)). An ATP-binding site is contributed by 12–17 (GSGKST).

Belongs to the CoaE family.

The protein localises to the cytoplasm. It carries out the reaction 3'-dephospho-CoA + ATP = ADP + CoA + H(+). It participates in cofactor biosynthesis; coenzyme A biosynthesis; CoA from (R)-pantothenate: step 5/5. Catalyzes the phosphorylation of the 3'-hydroxyl group of dephosphocoenzyme A to form coenzyme A. This Shigella flexneri protein is Dephospho-CoA kinase.